A 311-amino-acid polypeptide reads, in one-letter code: Thioredoxin reductase (311 aa).

An FAD-binding site is contributed by 35-42; sequence ERGIPGGQ. A disulfide bond links Cys134 and Cys137. 277-286 contributes to the FAD binding site; it reads DVRDKGLRQI.

This sequence belongs to the class-II pyridine nucleotide-disulfide oxidoreductase family. As to quaternary structure, homodimer. Requires FAD as cofactor.

The protein localises to the cytoplasm. It carries out the reaction [thioredoxin]-dithiol + NADP(+) = [thioredoxin]-disulfide + NADPH + H(+). This is Thioredoxin reductase (trxB) from Staphylococcus aureus (strain COL).